Consider the following 426-residue polypeptide: Enolase (426 aa).

Q163 is a binding site for (2R)-2-phosphoglycerate. E205 serves as the catalytic Proton donor. Residues D242, E286, and D313 each coordinate Mg(2+). 4 residues coordinate (2R)-2-phosphoglycerate: K338, R367, S368, and K389. Residue K338 is the Proton acceptor of the active site.

Belongs to the enolase family. The cofactor is Mg(2+).

Its subcellular location is the cytoplasm. The protein localises to the secreted. It localises to the cell surface. The catalysed reaction is (2R)-2-phosphoglycerate = phosphoenolpyruvate + H2O. It functions in the pathway carbohydrate degradation; glycolysis; pyruvate from D-glyceraldehyde 3-phosphate: step 4/5. Catalyzes the reversible conversion of 2-phosphoglycerate (2-PG) into phosphoenolpyruvate (PEP). It is essential for the degradation of carbohydrates via glycolysis. The chain is Enolase from Helicobacter pylori (strain ATCC 700392 / 26695) (Campylobacter pylori).